The primary structure comprises 396 residues: MAAEPPALRLRPPGSTGDSPPVPRLLGGCVPLSHQVAGHMYGKDKVGILQHPDGTVLKQLQPPPRGPRELEFYTMVYAADCADAVLLELRKHLPKYYGVWSPPSAPNDVYLKLEDVTHKFNKPCIMDVKIGRKSYDPFASAEKIQQQVSKYPLMEEIGFLVLGMRVYHLHSDSYETQNQHYGRGLTKETLKEGVSKFFHNGFCLRKDAVAASIQKVEKILQWFENQKQLNFYASSLLFVYEGSSQPATTKSNDRTLAGRFLSKGALSDADVLECNNNFHLFSSPANGTSVGKSLSKAYSRHRKLYAKKHQSQTSLKVETLEQDNGWKSMSQEHLNGNVLSQLEKVFYHLPAGRQEIAEAEVRMIDFAHVFPSNTVDEGYVYGLKHLIAVLRSILDS.

Positions 1 to 13 are enriched in low complexity; it reads MAAEPPALRLRPP. Residues 1–22 form a disordered region; sequence MAAEPPALRLRPPGSTGDSPPV. N-acetylalanine is present on Ala2. Ser19 is subject to Phosphoserine. Lys58 contributes to the ATP binding site. Arg65 is a substrate binding site. Residues 114 to 116 and Asp127 each bind ATP; that span reads EDV. Residues Lys129, 143 to 150, and Gln179 contribute to the substrate site; that span reads KIQQQVSK. The short motif at 300–310 is the Nuclear localization signal element; it reads RHRKLYAKKHQ. Asp365 contributes to the ATP binding site.

This sequence belongs to the inositol phosphokinase (IPK) family. It depends on Mg(2+) as a cofactor. Highly expressed in kidney, and at lower levels in hippocampus, brain cortex, cerebellum, heart and lung.

Its subcellular location is the nucleus. It carries out the reaction 1D-myo-inositol 1,4,5-trisphosphate + 2 ATP = 1D-myo-inositol 1,3,4,5,6-pentakisphosphate + 2 ADP + 2 H(+). It catalyses the reaction 1D-myo-inositol 1,3,4,6-tetrakisphosphate + ATP = 1D-myo-inositol 1,3,4,5,6-pentakisphosphate + ADP + H(+). The enzyme catalyses 1-octadecanoyl-2-(5Z,8Z,11Z,14Z)-eicosatetraenoyl-sn-glycero-3-phospho-1D-myo-inositol 4,5-bisphosphate + ATP = 1-octadecanoyl-2-(5Z,8Z,11Z,14Z-eicosatetraenoyl)-sn-glycero-3-phospho-(1D-myo-inositol 3,4,5-triphosphate) + ADP + H(+). The catalysed reaction is a 1,2-diacyl-sn-glycero-3-phospho-(1D-myo-inositol-4,5-bisphosphate) + ATP = a 1,2-diacyl-sn-glycero-3-phospho-(1D-myo-inositol-3,4,5-trisphosphate) + ADP + H(+). It carries out the reaction 1D-myo-inositol 1,4,5,6-tetrakisphosphate + ATP = 1D-myo-inositol 1,3,4,5,6-pentakisphosphate + ADP + H(+). It participates in phospholipid metabolism; phosphatidylinositol metabolism. Inositol phosphate kinase with a broad substrate specificity. Phosphorylates inositol 1,4,5-trisphosphate (Ins(1,4,5)P3) first to inositol 1,3,4,5-tetrakisphosphate and then to inositol 1,3,4,5,6-pentakisphosphate (Ins(1,3,4,5,6)P5). Phosphorylates inositol 1,3,4,6-tetrakisphosphate (Ins(1,3,4,6)P4). Phosphorylates inositol 1,4,5,6-tetrakisphosphate (Ins(1,4,5,6)P4). Phosphorylates glycero-3-phospho-1D-myo-inositol 4,5-bisphosphate to glycero-3-phospho-1D-myo-inositol 3,4,5-trisphosphate. Plays an important role in MLKL-mediated necroptosis via its role in the biosynthesis of inositol pentakisphosphate (InsP5) and inositol hexakisphosphate (InsP6). Binding of these highly phosphorylated inositol phosphates to MLKL mediates the release of an N-terminal auto-inhibitory region, leading to activation of the kinase. Essential for activated phospho-MLKL to oligomerize and localize to the cell membrane during necroptosis. Required for normal embryonic development, probably via its role in the biosynthesis of inositol 1,3,4,5,6-pentakisphosphate (Ins(1,3,4,5,6)P5) and inositol hexakisphosphate (InsP6). In Rattus norvegicus (Rat), this protein is Inositol polyphosphate multikinase (Ipmk).